We begin with the raw amino-acid sequence, 163 residues long: uncharacterized protein (163 aa).

Residues 136–161 adopt a coiled-coil conformation; it reads QKYIENHQKEINEHVEKLRTLHKELR.

This is an uncharacterized protein from Acanthamoeba polyphaga (Amoeba).